Reading from the N-terminus, the 92-residue chain is Small ribosomal subunit protein bS20 (92 aa).

This sequence belongs to the bacterial ribosomal protein bS20 family.

In terms of biological role, binds directly to 16S ribosomal RNA. The protein is Small ribosomal subunit protein bS20 of Methylacidiphilum infernorum (isolate V4) (Methylokorus infernorum (strain V4)).